The primary structure comprises 775 residues: Glutamine--tRNA ligase (775 aa).

Ala-2 carries the N-acetylalanine modification. Residue Ser-70 is modified to Phosphoserine. The short motif at 270–280 (PEPNGILHIGH) is the 'HIGH' region element. ATP-binding positions include 271–273 (EPN) and 277–283 (HIGHAKA). Position 303 (Asp-303) interacts with L-glutamine. The residue at position 309 (Lys-309) is an N6-acetyllysine. Tyr-438 is an L-glutamine binding site. ATP is bound by residues Thr-457, 486 to 487 (RL), and 494 to 496 (VSK). The 'KMSKS' region motif lies at 493–497 (VVSKR). Ser-495 carries the phosphoserine modification.

It belongs to the class-I aminoacyl-tRNA synthetase family. As to quaternary structure, monomer. Part of a multisubunit complex that groups tRNA ligases for Arg (RARS1), Asp (DARS1), Gln (QARS1), Ile (IARS1), Leu (LARS1), Lys (KARS1), Met (MARS1) the bifunctional ligase for Glu and Pro (EPRS1) and the auxiliary subunits AIMP1/p43, AIMP2/p38 and EEF1E1/p18. Interacts with RARS1. Part of a complex composed of RARS1, QARS1 and AIMP1.

It localises to the cytoplasm. The protein resides in the cytosol. The enzyme catalyses tRNA(Gln) + L-glutamine + ATP = L-glutaminyl-tRNA(Gln) + AMP + diphosphate. In terms of biological role, glutamine--tRNA ligase. Plays a critical role in brain development. In Bos taurus (Bovine), this protein is Glutamine--tRNA ligase (QARS1).